The primary structure comprises 234 residues: Purine nucleoside phosphorylase DeoD-type (234 aa).

Residue His5 coordinates a purine D-ribonucleoside. Phosphate-binding positions include Gly21, Arg25, Arg44, and 88–91 (RIGT). Residues 180 to 182 (DME) and 204 to 205 (SD) contribute to the a purine D-ribonucleoside site. Residue Asp205 is the Proton donor of the active site.

It belongs to the PNP/UDP phosphorylase family. Homohexamer; trimer of homodimers.

It catalyses the reaction a purine D-ribonucleoside + phosphate = a purine nucleobase + alpha-D-ribose 1-phosphate. The catalysed reaction is a purine 2'-deoxy-D-ribonucleoside + phosphate = a purine nucleobase + 2-deoxy-alpha-D-ribose 1-phosphate. In terms of biological role, catalyzes the reversible phosphorolytic breakdown of the N-glycosidic bond in the beta-(deoxy)ribonucleoside molecules, with the formation of the corresponding free purine bases and pentose-1-phosphate. The protein is Purine nucleoside phosphorylase DeoD-type of Buchnera aphidicola subsp. Acyrthosiphon pisum (strain 5A).